Reading from the N-terminus, the 212-residue chain is Holliday junction branch migration complex subunit RuvA (212 aa).

The tract at residues 1–70 is domain I; the sequence is MISYLKGSPI…EDQQILYGFS (70 aa). The interval 71–149 is domain II; that stretch reads TTAERELFRQ…QWRKMVGVTV (79 aa). The interval 150–160 is flexible linker; the sequence is TSSAAMPSLEI. Positions 160–212 are domain III; the sequence is ILEDIEMTLLALGYTNEEINKAISTLSQDNLMLKNTNTEEWIKEAIAWLSQGT.

The protein belongs to the RuvA family. Homotetramer. Forms an RuvA(8)-RuvB(12)-Holliday junction (HJ) complex. HJ DNA is sandwiched between 2 RuvA tetramers; dsDNA enters through RuvA and exits via RuvB. An RuvB hexamer assembles on each DNA strand where it exits the tetramer. Each RuvB hexamer is contacted by two RuvA subunits (via domain III) on 2 adjacent RuvB subunits; this complex drives branch migration. In the full resolvosome a probable DNA-RuvA(4)-RuvB(12)-RuvC(2) complex forms which resolves the HJ.

It localises to the cytoplasm. The RuvA-RuvB-RuvC complex processes Holliday junction (HJ) DNA during genetic recombination and DNA repair, while the RuvA-RuvB complex plays an important role in the rescue of blocked DNA replication forks via replication fork reversal (RFR). RuvA specifically binds to HJ cruciform DNA, conferring on it an open structure. The RuvB hexamer acts as an ATP-dependent pump, pulling dsDNA into and through the RuvAB complex. HJ branch migration allows RuvC to scan DNA until it finds its consensus sequence, where it cleaves and resolves the cruciform DNA. In Crocosphaera subtropica (strain ATCC 51142 / BH68) (Cyanothece sp. (strain ATCC 51142)), this protein is Holliday junction branch migration complex subunit RuvA.